We begin with the raw amino-acid sequence, 255 residues long: Ribosomal RNA large subunit methyltransferase E (255 aa).

Residues glycine 50, tryptophan 52, aspartate 68, aspartate 84, and aspartate 108 each coordinate S-adenosyl-L-methionine. The active-site Proton acceptor is lysine 148. The 59-residue stretch at 195 to 253 folds into the TRAM domain; that stretch reads PVRSGEIYDVTVDSVGRTGDGIAMIQGFAVIVKNASPGERLRIKIGPVKQRFAFASILE.

This sequence belongs to the class I-like SAM-binding methyltransferase superfamily. RNA methyltransferase RlmE family.

The protein localises to the cytoplasm. It catalyses the reaction uridine(2552) in 23S rRNA + S-adenosyl-L-methionine = 2'-O-methyluridine(2552) in 23S rRNA + S-adenosyl-L-homocysteine + H(+). Functionally, specifically methylates the uridine in position 2552 of 23S rRNA at the 2'-O position of the ribose in the fully assembled 50S ribosomal subunit. The protein is Ribosomal RNA large subunit methyltransferase E of Methanothrix thermoacetophila (strain DSM 6194 / JCM 14653 / NBRC 101360 / PT) (Methanosaeta thermophila).